The primary structure comprises 547 residues: Nuclear speckle splicing regulatory protein 1 (547 aa).

A disordered region spans residues 25 to 51; sequence KPSVFGNDSDDDEASVSESLQREAAKK. Phosphoserine is present on residues S27 and S33. A coiled-coil region spans residues 103–177; the sequence is IHNLLKAVEI…EARLDVTKQK (75 aa). Residues 105–169 are necessary for alternative splicing activity; sequence NLLKAVEIRK…REKRAAALEA (65 aa). The interval 188–523 is disordered; that stretch reads NQAVGEEAVP…KRSNEETVMS (336 aa). Residues K198 and K209 each participate in a glycyl lysine isopeptide (Lys-Gly) (interchain with G-Cter in SUMO2) cross-link. Basic and acidic residues predominate over residues 200 to 217; it reads SFREARTVIKEEKLRGYP. Residues 223 to 232 show a composition bias toward polar residues; it reads ENRPQQNCAL. Residues 237-254 are compositionally biased toward acidic residues; that stretch reads EEAEENPDADSDSEESCD. A phosphoserine mark is found at S247 and S252. A compositionally biased stretch (basic and acidic residues) spans 255 to 269; it reads DGERGDHKVKSRGEE. Position 276 is an N6-acetyllysine (K276). Over residues 277–287 the composition is skewed to basic residues; that stretch reads YLKHHKNHTHS. K279 is covalently cross-linked (Glycyl lysine isopeptide (Lys-Gly) (interchain with G-Cter in SUMO2)). Basic and acidic residues predominate over residues 308–339; that stretch reads RGHEHKGGQHQDRQSRDQESCHKDRSHREEKS. Basic residues predominate over residues 340–355; it reads SHRHREASHKDHHWKR. 2 stretches are compositionally biased toward basic and acidic residues: residues 356-480 and 490-506; these read HEHE…KPPR and RLTE…ERPP. Residues 376-417 adopt a coiled-coil conformation; sequence KREKYSSREQEKDRQWNDHDRYSEKEKKGKEKEEHRKARRER. The residue at position 447 (S447) is a Phosphoserine.

Belongs to the NSRP1 family. As to quaternary structure, interacts (via C-terminus) with SRSF1. Interacts (via C-terminus) with SRSF2.

The protein localises to the nucleus. It localises to the nucleus speckle. Functionally, RNA-binding protein that mediates pre-mRNA alternative splicing regulation. In Rattus norvegicus (Rat), this protein is Nuclear speckle splicing regulatory protein 1 (Nsrp1).